The primary structure comprises 489 residues: MKYHDLRDFLTLLEQQGELKRITLPVDPHLEITEIADRTLRAGGPALLFENPKGYAMPVLCNLFGTPKRVAMGMGQDDVSALREVGKLLAFLKEPEPPKGFRDLFDKLPQFKQVLNMPTKRLRGAPCQQKIASGDDVDLTRLPVMTCWPDDAAPLITWGLTVTRGPHKERQNLGIYRQQLIGKNKLIMRWLSHRGGALDFQEWLAARPGERFPVSVALGADPATILGAVTPVPDTLSEYAFAGLLRGTKTEVVKCLSNDLEAPASAEIILEGYIEPGEMAPEGPYGDHTGYYNEVDNFPVFTVTHITQREDAIYHSTYTGRPPDEPAVLGVALNEVFVPILQKQFPEIVDFYLPPEGCSYRLAVVTMKKQYAGHAKRVMMGVWSFLRQFMYTKFVIVCDDDVNARDWNDVIWAITTRMDPARDTVLVENTPIDYLDFASPVSGLGSKMGLDATNKWPGETQREWGRPIVKDPEVTARIDAIWDELAIFK.

Asn-172 contacts Mn(2+). Prenylated FMN contacts are provided by residues 175–177 (IYR), 189–191 (RWL), and 194–195 (RG). A Mn(2+)-binding site is contributed by Glu-238. Catalysis depends on Asp-287, which acts as the Proton donor.

This sequence belongs to the UbiD family. In terms of assembly, homohexamer. Prenylated FMN serves as cofactor. It depends on Mn(2+) as a cofactor.

It localises to the cell membrane. The catalysed reaction is a 4-hydroxy-3-(all-trans-polyprenyl)benzoate + H(+) = a 2-(all-trans-polyprenyl)phenol + CO2. It participates in cofactor biosynthesis; ubiquinone biosynthesis. In terms of biological role, catalyzes the decarboxylation of 3-octaprenyl-4-hydroxy benzoate to 2-octaprenylphenol, an intermediate step in ubiquinone biosynthesis. In Salmonella paratyphi B (strain ATCC BAA-1250 / SPB7), this protein is 3-octaprenyl-4-hydroxybenzoate carboxy-lyase.